A 491-amino-acid chain; its full sequence is Interferon regulatory factor 3 (491 aa).

A DNA-binding region (IRF tryptophan pentad repeat) is located at residues 12–116 (KLRFGPWLLN…DPHKVYAVAS (105 aa)).

The protein belongs to the IRF family. As to expression, widely expressed with higher expression in lung, spleen and intestine.

The protein resides in the cytoplasm. The protein localises to the nucleus. In terms of biological role, key transcriptional regulator of type I interferon (IFN)-dependent immune responses which plays a critical role in the innate immune response against DNA and RNA viruses. Regulates the transcription of type I IFN genes (IFN-alpha and IFN-beta) and IFN-stimulated genes (ISG) by binding to an interferon-stimulated response element (ISRE) in their promoters. May activate transcription by complex formation with other transcriptional factors, possibly members of the STAT family. Binds specifically to the IFN-stimulated response element (ISRE) but not to the IRF-1 binding site PRD-I. This chain is Interferon regulatory factor 3 (IRF3), found in Gallus gallus (Chicken).